Here is a 62-residue protein sequence, read N- to C-terminus: Photosystem II reaction center protein Z (62 aa).

2 helical membrane passes run 8–28 (AVFA…VVLA) and 41–61 (FSGA…NSFV).

This sequence belongs to the PsbZ family. In terms of assembly, PSII is composed of 1 copy each of membrane proteins PsbA, PsbB, PsbC, PsbD, PsbE, PsbF, PsbH, PsbI, PsbJ, PsbK, PsbL, PsbM, PsbT, PsbY, PsbZ, Psb30/Ycf12, at least 3 peripheral proteins of the oxygen-evolving complex and a large number of cofactors. It forms dimeric complexes.

It is found in the plastid. Its subcellular location is the chloroplast thylakoid membrane. Functionally, may control the interaction of photosystem II (PSII) cores with the light-harvesting antenna, regulates electron flow through the 2 photosystem reaction centers. PSII is a light-driven water plastoquinone oxidoreductase, using light energy to abstract electrons from H(2)O, generating a proton gradient subsequently used for ATP formation. This chain is Photosystem II reaction center protein Z, found in Zygnema circumcarinatum (Green alga).